The chain runs to 723 residues: BBSome complex assembly protein BBS10 (723 aa).

This sequence belongs to the TCP-1 chaperonin family. In terms of assembly, component of a complex composed at least of MKKS, BBS10, BBS12, TCP1, CCT2, CCT3, CCT4, CCT5 and CCT8.

The protein localises to the cell projection. It localises to the cilium. In terms of biological role, probable molecular chaperone that assists the folding of proteins upon ATP hydrolysis. Plays a role in the assembly of BBSome, a complex involved in ciliogenesis regulating transports vesicles to the cilia. Involved in adipogenic differentiation. In Pongo abelii (Sumatran orangutan), this protein is BBSome complex assembly protein BBS10 (BBS10).